The chain runs to 278 residues: Phosphonates import ATP-binding protein PhnC 1 (278 aa).

An ABC transporter domain is found at 5–253 (IRVDSLNKTF…FLNELYGAEG (249 aa)). 37–44 (GASGSGKS) is a binding site for ATP.

The protein belongs to the ABC transporter superfamily. Phosphonates importer (TC 3.A.1.9.1) family. As to quaternary structure, the complex is composed of two ATP-binding proteins (PhnC), two transmembrane proteins (PhnE) and a solute-binding protein (PhnD).

The protein localises to the cell inner membrane. It catalyses the reaction phosphonate(out) + ATP + H2O = phosphonate(in) + ADP + phosphate + H(+). Functionally, part of the ABC transporter complex PhnCDE involved in phosphonates import. Responsible for energy coupling to the transport system. The sequence is that of Phosphonates import ATP-binding protein PhnC 1 from Pseudomonas aeruginosa (strain UCBPP-PA14).